Consider the following 162-residue polypeptide: Probable chorismate pyruvate-lyase (162 aa).

Residues arginine 54, leucine 92, and glutamate 149 each coordinate substrate.

The protein belongs to the UbiC family.

The protein resides in the cytoplasm. It catalyses the reaction chorismate = 4-hydroxybenzoate + pyruvate. It functions in the pathway cofactor biosynthesis; ubiquinone biosynthesis. Functionally, removes the pyruvyl group from chorismate, with concomitant aromatization of the ring, to provide 4-hydroxybenzoate (4HB) for the ubiquinone pathway. The chain is Probable chorismate pyruvate-lyase from Methylococcus capsulatus (strain ATCC 33009 / NCIMB 11132 / Bath).